We begin with the raw amino-acid sequence, 153 residues long: Ubiquitin/ISG15-conjugating enzyme E2 L6 (153 aa).

The UBC core domain occupies 2-149; it reads TASKRVAKEL…AEEFTLQYGV (148 aa). Cys-86 serves as the catalytic Glycyl thioester intermediate.

It belongs to the ubiquitin-conjugating enzyme family. In terms of assembly, interacts with RNF19A, RNF19B and RNF144B. Interacts with FLT3 (tyrosine phosphorylated). Post-translationally, ISGylated.

It carries out the reaction S-ubiquitinyl-[E1 ubiquitin-activating enzyme]-L-cysteine + [E2 ubiquitin-conjugating enzyme]-L-cysteine = [E1 ubiquitin-activating enzyme]-L-cysteine + S-ubiquitinyl-[E2 ubiquitin-conjugating enzyme]-L-cysteine.. It participates in protein modification; protein ubiquitination. Catalyzes the covalent attachment of ubiquitin to other proteins. Functions in the E6/E6-AP-induced ubiquitination of p53/TP53. Promotes ubiquitination and subsequent proteasomal degradation of FLT3. This is Ubiquitin/ISG15-conjugating enzyme E2 L6 (Ube2l6) from Rattus norvegicus (Rat).